The chain runs to 309 residues: Probable WRKY transcription factor 26 (309 aa).

The interval 1 to 24 is disordered; that stretch reads MGSFDRQRAVPKFKTATPSPLPLS. Positions 111-176 form a DNA-binding region, WRKY 1; sequence SSNKTSDDGY…YKGSHNHPKP (66 aa). Zn(2+) is bound by residues Cys-142, Cys-147, His-171, and His-173. Positions 167–210 are disordered; that stretch reads YKGSHNHPKPQSTKRSSSTAIAAHQNSSNGDGKDIGEDETEAKR. Residues 175-196 show a composition bias toward polar residues; that stretch reads KPQSTKRSSSTAIAAHQNSSNG. Positions 197-210 are enriched in basic and acidic residues; the sequence is DGKDIGEDETEAKR. A DNA-binding region (WRKY 2) is located at residues 228–293; the sequence is SDIDILDDGY…YEGKHKHQIP (66 aa). The Zn(2+) site is built by Cys-259, Cys-264, His-288, and His-290.

It belongs to the WRKY group I family. In terms of assembly, interacts with VQ10.

It localises to the nucleus. Transcription factor. Interacts specifically with the W box (5'-(T)TGAC[CT]-3'), a frequently occurring elicitor-responsive cis-acting element. Functions with WRKY25 and WRKY33 as positive regulator of plant thermotolerance by partially participating in ethylene-response signal transduction pathway. The chain is Probable WRKY transcription factor 26 (WRKY26) from Arabidopsis thaliana (Mouse-ear cress).